Reading from the N-terminus, the 371-residue chain is Queuine tRNA-ribosyltransferase (371 aa).

The Proton acceptor role is filled by D89. Residues 89-93 (DSGGF), D143, Q185, and G212 each bind substrate. The segment at 243–249 (GVGKPED) is RNA binding. The active-site Nucleophile is D262. Positions 267 to 271 (TRNAR) are RNA binding; important for wobble base 34 recognition. Zn(2+) contacts are provided by C300, C302, C305, and H331.

This sequence belongs to the queuine tRNA-ribosyltransferase family. In terms of assembly, homodimer. Within each dimer, one monomer is responsible for RNA recognition and catalysis, while the other monomer binds to the replacement base PreQ1. Requires Zn(2+) as cofactor.

The enzyme catalyses 7-aminomethyl-7-carbaguanine + guanosine(34) in tRNA = 7-aminomethyl-7-carbaguanosine(34) in tRNA + guanine. The protein operates within tRNA modification; tRNA-queuosine biosynthesis. Catalyzes the base-exchange of a guanine (G) residue with the queuine precursor 7-aminomethyl-7-deazaguanine (PreQ1) at position 34 (anticodon wobble position) in tRNAs with GU(N) anticodons (tRNA-Asp, -Asn, -His and -Tyr). Catalysis occurs through a double-displacement mechanism. The nucleophile active site attacks the C1' of nucleotide 34 to detach the guanine base from the RNA, forming a covalent enzyme-RNA intermediate. The proton acceptor active site deprotonates the incoming PreQ1, allowing a nucleophilic attack on the C1' of the ribose to form the product. After dissociation, two additional enzymatic reactions on the tRNA convert PreQ1 to queuine (Q), resulting in the hypermodified nucleoside queuosine (7-(((4,5-cis-dihydroxy-2-cyclopenten-1-yl)amino)methyl)-7-deazaguanosine). The polypeptide is Queuine tRNA-ribosyltransferase (Pseudomonas putida (strain ATCC 47054 / DSM 6125 / CFBP 8728 / NCIMB 11950 / KT2440)).